Reading from the N-terminus, the 249-residue chain is Phycobilisome 27.9 kDa linker polypeptide, phycoerythrin-associated, rod (249 aa).

The PBS-linker domain maps to 2 to 166 (ASQTILELWP…LDRGPAQIDS (165 aa)). The CpcD-like domain maps to 198–248 (EKRFKILVQGSKFDSPRRISTTEYIVPASKMTPQIQRINRTSGKIVSITEI).

It belongs to the phycobilisome linker protein family. The phycobilisome is a hemidiscoidal structure that is composed of two distinct substructures: a core complex and six rods radiating from the core.

It localises to the cellular thylakoid membrane. Rod linker protein, associated with phycoerythrin. Linker polypeptides determine the state of aggregation and the location of the disk-shaped phycobiliprotein units within the phycobilisome and modulate their spectroscopic properties in order to mediate a directed and optimal energy transfer. The protein is Phycobilisome 27.9 kDa linker polypeptide, phycoerythrin-associated, rod (cpeD) of Microchaete diplosiphon (Fremyella diplosiphon).